Reading from the N-terminus, the 160-residue chain is Bursicon (160 aa).

The N-terminal stretch at 1 to 20 is a signal peptide; the sequence is MSVLNTFLVIVALILCYVND. A CTCK domain is found at 38-131; sequence CQECQMTAVI…PLQCMCRPCG (94 aa). Intrachain disulfides connect C41–C90, C55–C104, C65–C125, C69–C127, and C87–C130.

In terms of assembly, heterodimer of burs and pburs.

Its subcellular location is the secreted. In terms of biological role, final heterodimeric neurohormone released at the end of the molting cycle, involved in the sclerotization (tanning) of the insect cuticle, melanization and wing spreading. The polypeptide is Bursicon (Bombyx mori (Silk moth)).